Here is a 119-residue protein sequence, read N- to C-terminus: Small ribosomal subunit protein uS10 (119 aa).

This sequence belongs to the universal ribosomal protein uS10 family. As to quaternary structure, component of the small ribosomal subunit. Mature ribosomes consist of a small (40S) and a large (60S) subunit. The 40S subunit contains about 32 different proteins and 1 molecule of RNA (18S). The 60S subunit contains 45 different proteins and 3 molecules of RNA (25S, 5.8S and 5S).

Its subcellular location is the cytoplasm. Component of the ribosome, a large ribonucleoprotein complex responsible for the synthesis of proteins in the cell. The small ribosomal subunit (SSU) binds messenger RNAs (mRNAs) and translates the encoded message by selecting cognate aminoacyl-transfer RNA (tRNA) molecules. The large subunit (LSU) contains the ribosomal catalytic site termed the peptidyl transferase center (PTC), which catalyzes the formation of peptide bonds, thereby polymerizing the amino acids delivered by tRNAs into a polypeptide chain. The nascent polypeptides leave the ribosome through a tunnel in the LSU and interact with protein factors that function in enzymatic processing, targeting, and the membrane insertion of nascent chains at the exit of the ribosomal tunnel. This chain is Small ribosomal subunit protein uS10 (RPS20), found in Candida albicans (strain SC5314 / ATCC MYA-2876) (Yeast).